The chain runs to 394 residues: Carbamoyltransferase HypF homolog (394 aa).

It belongs to the carbamoyltransferase HypF family.

The chain is Carbamoyltransferase HypF homolog (hypF1) from Cupriavidus necator (strain ATCC 17699 / DSM 428 / KCTC 22496 / NCIMB 10442 / H16 / Stanier 337) (Ralstonia eutropha).